The primary structure comprises 159 residues: Ribosomal RNA large subunit methyltransferase H (159 aa).

Residues leucine 76, glycine 108, and 127–132 contribute to the S-adenosyl-L-methionine site; that span reads FGLLTL.

Belongs to the RNA methyltransferase RlmH family. Homodimer.

It is found in the cytoplasm. It catalyses the reaction pseudouridine(1915) in 23S rRNA + S-adenosyl-L-methionine = N(3)-methylpseudouridine(1915) in 23S rRNA + S-adenosyl-L-homocysteine + H(+). Specifically methylates the pseudouridine at position 1915 (m3Psi1915) in 23S rRNA. The polypeptide is Ribosomal RNA large subunit methyltransferase H (Streptococcus pyogenes serotype M3 (strain SSI-1)).